Reading from the N-terminus, the 623-residue chain is Kelch repeat and BTB domain-containing protein 12 (623 aa).

A BTB domain is found at 31-98 (IDVVLTAEGE…MYNAALEINN (68 aa)). The BACK domain occupies 133–235 (CLGIYYFAKQ…NPSFLRQALR (103 aa)). Kelch repeat units follow at residues 386-436 (DLYV…TVNN), 437-492 (KLYV…VVNS), 494-547 (IYVL…STNA), and 553-603 (KLYV…LVAR).

This chain is Kelch repeat and BTB domain-containing protein 12 (KBTBD12), found in Homo sapiens (Human).